The following is a 70-amino-acid chain: DNA-directed RNA polymerase subunit epsilon (70 aa).

Belongs to the RNA polymerase subunit epsilon family. As to quaternary structure, RNAP is composed of a core of 2 alpha, a beta and a beta' subunit. The core is associated with a delta subunit, and at least one of epsilon or omega. When a sigma factor is associated with the core the holoenzyme is formed, which can initiate transcription.

The catalysed reaction is RNA(n) + a ribonucleoside 5'-triphosphate = RNA(n+1) + diphosphate. Its function is as follows. A non-essential component of RNA polymerase (RNAP). The protein is DNA-directed RNA polymerase subunit epsilon of Lacticaseibacillus casei (strain BL23) (Lactobacillus casei).